Reading from the N-terminus, the 177-residue chain is Protein ParB (177 aa).

The signal sequence occupies residues 1–26; that stretch reads MKRRSYAMLRAAAALAVLVVASPAWA. The 131-residue stretch at 27–157 folds into the TNase-like domain; it reads ELRGEVVRII…RGKRVGLWSD (131 aa). Residues Arg53, Glu61, and Arg95 contribute to the active site.

Monomer. The cofactor is Ca(2+). Post-translationally, the N-terminus is blocked.

It localises to the secreted. Endonuclease activity is inhibited by EDTA. Its function is as follows. Involved in plasmid partition. An endonuclease that acts on supercoiled dsDNA, converting it first to open circular DNA and then linearizing it. Preferentially cleaves regions in dsDNA that are capable of forming ssDNA, such as AT-rich regions and sequences that can form cruciforms. Has poor endonucleolytic activity on linear DNA, has 5'-3' exonuclease activity on dsDNA cleaving generating 3'-phosphonucleotides. The chain is Protein ParB from Escherichia coli.